The following is a 342-amino-acid chain: Aldo-keto reductase pigE (342 aa).

The signal sequence occupies residues 1–27 (MGSISPKTRFPIVLGAGLIGSPGLFEG). Asp52 is a binding site for NADP(+). Tyr57 acts as the Proton donor in catalysis. Gln182 and Arg236 together coordinate NADP(+). A glycan (N-linked (GlcNAc...) asparagine) is linked at Asn271.

This sequence belongs to the aldo/keto reductase family. Aldo/keto reductase 2 subfamily.

It functions in the pathway secondary metabolite biosynthesis. Functionally, aldo-keto reductase; part of the gene cluster that mediates the biosynthesis of azaphilone pigments (MonAzPs), a complex mixture of compounds with a common azaphilone skeleton very widely used as food colorants. Within the pathway, pigE is involved in the dehydration of the C-11 alcohol followed by the reduction of the C6(7) double bond which increases the electrophilicity of the C-5 ketone of the resulting acyl benzopyran and allows the intramolecular Knoevenagel aldol condensation with the C-20 enol of the side chain to yield the characteristic linear tricyclic carbon skeletons of the yellow pigments. The first step of the pathway is performed by the nrPKS pigA that forms the hexaketide precursor from successive condensations of five malonyl-CoA units, with a simple acetyl-CoA starter unit. The role of esterase pigG is not clear, but it may play at most a supplementary role in the formation of the benzaldehyde produced by the pigA nrPKS. This very reactive benzaldehyde is intercepted by the pigC ketoreductase that to provide the first stable enzyme-free MonAzPs intermediate, 6-(4-hydroxy-2-oxopentyl)-3-methyl-2,4-dioxocyclohexane carbaldehyde, also known as M7PKS-1. The FAD-dependent monooxygenase pigN hydroxylates M7PKS-1 at C-4, which triggers the formation of the pyran ring. PigJ, pigK and pigD are involved in the acetylation of the pyran ring. PigJ and pigK form the two subunits of a dedicated fungal FAS that produces the side chain fatty acyl moiety of MonAzPs and pigD transfers the fatty acyl chain to the C-4 alcohol. PigM and pigO are involved in the elimination of the omega-1 alcohol. PigM acts as an O-acetyltransferase that synthesizes the putative O-11 acetyl intermediate whereas pigO eliminates acetic acid to yield an intermediate with a C10(11) double bond. The dehydration of the C-11 alcohol followed by the reduction of the C6(7) double bond by the NAD(P)H-dependent oxidoreductase pigE increases the electrophilicity of the C-5 ketone of the resulting acyl benzopyran. This in turn sets up the C-5 ketone for an intramolecular Knoevenagel aldol condensation with the C-20 enol of the side chain. This condensation affords the characteristic linear tricyclic carbon skeletons of the yellow pigments that serve as the common precursors for the classical yellow pigments monascin and ankaflavin, orange pigments rubopunctatin and monascorubrin, and red pigments ribropunctamine and monascorubramine. The FAD-dependent oxidoreductase pigF is especially invoved in the biosynthesis of orange and red pigments via desaturation of C6(7). In Monascus ruber (Mold), this protein is Aldo-keto reductase pigE.